A 288-amino-acid chain; its full sequence is CUF1-dependent copper transporter 1 (288 aa).

N18 carries N-linked (GlcNAc...) asparagine glycosylation. The chain crosses the membrane as a helical span at residues 42 to 62 (MPSSAGATVGVCIGLFILAIF). Disordered stretches follow at residues 106–125 (PVLF…YNPL) and 154–180 (RESQ…GSGV). A compositionally biased stretch (polar residues) spans 158-167 (EGSSAPSYAH). The segment covering 168 to 177 (SQQGQAQAQG) has biased composition (low complexity). A helical transmembrane segment spans residues 251 to 271 (LLMLVVMTFNIWWMISVVIGC).

The protein belongs to the copper transporter (Ctr) (TC 1.A.56) family. SLC31A subfamily. As to quaternary structure, interacts with the copper acquisition factor BIM1.

Its subcellular location is the cell membrane. In terms of biological role, high affinity copper transporter involved in Cu(+) import into the cell upon copper-limitating conditions. Functions with BIM1 and probably also FRE4 and FRE7, where FRE4 and FRE7 metalloreductases liberate the Cu(2+) bound to the BIM1 copper-binding site for subsequent import of Cu(+) into the cell by CTR1, via the reduction of BIM1-bound Cu(2+) to Cu(+) to reduce binding affinity for BIM1 but increase affinity for CTR1. The BIM1-CTR1 pathway for copper uptake plays a key role in colonization in the brain where copper amounts are low and thus in cryptococcal meningitis. The protein is CUF1-dependent copper transporter 1 of Cryptococcus neoformans var. grubii serotype A (strain H99 / ATCC 208821 / CBS 10515 / FGSC 9487) (Filobasidiella neoformans var. grubii).